A 294-amino-acid chain; its full sequence is MINGIINLKKEAGMTSHDAVFKLRKLLQEKKIGHGGTLDPDVVGVLPIAVGKATRVIEYMTEAGKVYEGQVTLGYSTTTEDASGEVVARSSLPAVLTEELVDQTMTTFLGKITQTPPMYSAVKVNGRKLYEYARAGESVERPRREVTISQFERTSPLNFTEDDLCRFSFKVACSKGTYVRTLAVDLGRALGVESHMSFLQRSASAGLTLETAYTLGEIADMVSKQEMSFLLPIEYGVADLPKMVIDDTELTEISFGRRLSLPSQEPLLAAFHGEKVIAILEKRDQEYKPKKVLI.

Catalysis depends on D39, which acts as the Nucleophile.

It belongs to the pseudouridine synthase TruB family. Type 1 subfamily.

The enzyme catalyses uridine(55) in tRNA = pseudouridine(55) in tRNA. Its function is as follows. Responsible for synthesis of pseudouridine from uracil-55 in the psi GC loop of transfer RNAs. The sequence is that of tRNA pseudouridine synthase B from Streptococcus pyogenes serotype M2 (strain MGAS10270).